Here is a 214-residue protein sequence, read N- to C-terminus: Putative ankyrin repeat protein R844 (214 aa).

ANK repeat units follow at residues 41 to 70 (VEKN…QNKF), 81 to 110 (SLDK…NVKT), 111 to 140 (DNNM…DVRA), 142 to 170 (NDCA…DVTS), and 172 to 200 (NNFA…DIRA).

The sequence is that of Putative ankyrin repeat protein R844 from Acanthamoeba polyphaga mimivirus (APMV).